The following is a 460-amino-acid chain: ATP synthase subunit beta (460 aa).

An ATP-binding site is contributed by G150–T157.

The protein belongs to the ATPase alpha/beta chains family. F-type ATPases have 2 components, CF(1) - the catalytic core - and CF(0) - the membrane proton channel. CF(1) has five subunits: alpha(3), beta(3), gamma(1), delta(1), epsilon(1). CF(0) has three main subunits: a(1), b(2) and c(9-12). The alpha and beta chains form an alternating ring which encloses part of the gamma chain. CF(1) is attached to CF(0) by a central stalk formed by the gamma and epsilon chains, while a peripheral stalk is formed by the delta and b chains.

It localises to the cell inner membrane. It catalyses the reaction ATP + H2O + 4 H(+)(in) = ADP + phosphate + 5 H(+)(out). In terms of biological role, produces ATP from ADP in the presence of a proton gradient across the membrane. The catalytic sites are hosted primarily by the beta subunits. The protein is ATP synthase subunit beta of Yersinia enterocolitica serotype O:8 / biotype 1B (strain NCTC 13174 / 8081).